Reading from the N-terminus, the 920-residue chain is 3-hydroxy-3-methylglutaryl-coenzyme A reductase (920 aa).

A helical transmembrane segment spans residues 12–32 (FCASHPWEVIVALLTITACML). N-linked (GlcNAc...) asparagine glycosylation occurs at asparagine 37. A disordered region spans residues 62–85 (GAGSGASGTIPPSSMGGSATSSRH). A compositionally biased stretch (polar residues) spans 71–82 (IPPSSMGGSATS). One can recognise an SSD domain in the interval 106–263 (DVILMTIVRC…MTFYPACLSL (158 aa)). The next 5 membrane-spanning stretches (helical) occupy residues 107 to 129 (VILM…CSLH), 136 to 156 (VLGI…TAII), 170 to 190 (LFFL…QLAL), 208 to 228 (LLGP…GVGT), and 237 to 257 (VLCM…MTFY). Residues asparagine 342 and asparagine 346 are each glycosylated (N-linked (GlcNAc...) asparagine). A helical transmembrane segment spans residues 364–384 (SADHIVISIVLIALVVKFICF). Positions 385–498 (DNRDPLPDQL…EEIVSIVHAG (114 aa)) are linker. N-linked (GlcNAc...) asparagine glycans are attached at residues asparagine 443 and asparagine 475. Residues 499–829 (GTHCPLHKIE…TCTMPSLEVG (331 aa)) form a catalytic region. Residues glutamate 586, lysine 717, and aspartate 793 each act as charge relay system in the active site. Asparagine 797 and asparagine 802 each carry an N-linked (GlcNAc...) asparagine glycan. Histidine 892 serves as the catalytic Proton donor. Residues asparagine 896 and asparagine 910 are each glycosylated (N-linked (GlcNAc...) asparagine).

Belongs to the HMG-CoA reductase family. Highly expressed in embryonic gonadal mesoderm, where expression is initially broad, and then becomes restricted to a segmental pattern at stage 11. Expression is then further restricted to a cluster of cells in each of parasegments 10, 11 and 12, corresponding to the developing gonadal mesoderm. Not expressed in pole cells.

The protein localises to the endoplasmic reticulum membrane. The enzyme catalyses (R)-mevalonate + 2 NADP(+) + CoA = (3S)-3-hydroxy-3-methylglutaryl-CoA + 2 NADPH + 2 H(+). It participates in metabolic intermediate biosynthesis; (R)-mevalonate biosynthesis; (R)-mevalonate from acetyl-CoA: step 3/3. With respect to regulation, the activity of HMG-CoA-reductase is suppressed by exogenous mevalonate. Synthesis of mevalonate for the production of non-sterol isoprenoids, which are essential for growth differentiation. Provides spatial information during embryogenesis to guide migrating primordial germ cells (the pole cells) from the ectoderm to the mesoderm. Also required for association of the pole cells with the gonadal mesoderm. The sequence is that of 3-hydroxy-3-methylglutaryl-coenzyme A reductase (Hmgcr) from Drosophila melanogaster (Fruit fly).